The primary structure comprises 176 residues: Urease accessory protein UreE (176 aa).

The disordered stretch occupies residues 134–176 (EAGAYGSGGHHHHGESSQGHAHGPLAPIPVHQKIHRPSDIPSR).

It belongs to the UreE family.

Its subcellular location is the cytoplasm. In terms of biological role, involved in urease metallocenter assembly. Binds nickel. Probably functions as a nickel donor during metallocenter assembly. The protein is Urease accessory protein UreE of Nitrosospira multiformis (strain ATCC 25196 / NCIMB 11849 / C 71).